The chain runs to 458 residues: Mitochondrial-processing peptidase subunit beta (458 aa).

A mitochondrion-targeting transit peptide spans 1–41 (MYRRLASGLYQTSQRRIAQVQPKSVFVPETIVTTLPNGFRV). Histidine 73 lines the Zn(2+) pocket. Glutamate 76 serves as the catalytic Proton acceptor. The Zn(2+) site is built by histidine 77 and glutamate 153.

It belongs to the peptidase M16 family. In terms of assembly, heterodimer of mppa-1 (alpha) and mppb-1 (beta) subunits, forming the mitochondrial processing protease (MPP) in which mppa-1 is involved in substrate recognition and binding and mppb-1 is the catalytic subunit. Zn(2+) serves as cofactor.

The protein localises to the mitochondrion matrix. The catalysed reaction is Release of N-terminal transit peptides from precursor proteins imported into the mitochondrion, typically with Arg in position P2.. With respect to regulation, binding to mppa-1 is required for catalytic activity. Inhibited by metal chelator ethylenediaminetetraacetic acid (EDTA). Its function is as follows. Catalytic subunit of the essential mitochondrial processing protease (MPP), which cleaves the mitochondrial sequence off newly imported precursors proteins. Preferentially, cleaves after an arginine at position P2. The protein is Mitochondrial-processing peptidase subunit beta of Caenorhabditis elegans.